Consider the following 588-residue polypeptide: Calcium/calmodulin-dependent protein kinase kinase 2 (588 aa).

Residues 1-11 show a composition bias toward polar residues; it reads MSSCVSSQPTS. 2 disordered regions span residues 1-34 and 64-147; these read MSSC…KPCE and DLNL…PTVE. Ser2 bears the N-acetylserine mark. 5 positions are modified to phosphoserine: Ser99, Ser114, Ser129, Ser133, and Ser137. Residues 101–116 show a composition bias toward polar residues; sequence QEPSQGGPASSSNSLD. Residues 124–139 are compositionally biased toward low complexity; that stretch reads PSLSYSPASSPQSSPR. One can recognise a Protein kinase domain in the interval 165-446; it reads YTLKDEIGKG…VPEIKLHPWV (282 aa). Residues 171–179 and Lys194 each bind ATP; that span reads IGKGSYGVV. The segment at 204 to 226 is RP domain; it reads QAGFPRRPPPRGARPAPGGCIQP. Residues 205-225 form a disordered region; that stretch reads AGFPRRPPPRGARPAPGGCIQ. Asp312 serves as the catalytic Proton acceptor. Positions 472–477 are autoinhibitory domain; the sequence is ENSVKH. Positions 475–500 are calmodulin-binding; sequence VKHIPSLATVILVKTMIRKRSFGNPF. Ser495, Ser511, Thr522, and Ser572 each carry phosphoserine. Residues 497 to 588 are disordered; that stretch reads GNPFEGSRRE…LQPEEVMEPE (92 aa). Basic and acidic residues predominate over residues 521–536; the sequence is PTREWEPLSEPKEARQ. Pro residues predominate over residues 570-580; sequence PGSPPRMPPLQ.

This sequence belongs to the protein kinase superfamily. Ser/Thr protein kinase family. Interacts with calmodulin. In terms of processing, autophosphorylated and phosphorylated by PKA. Each isoform may show a different pattern of phosphorylation. As to expression, expressed in all tissues tested. A differential expression pattern compared to CAMKK1 is observed in the brain.

The protein localises to the nucleus. The protein resides in the cytoplasm. It is found in the cell projection. It localises to the neuron projection. It catalyses the reaction L-seryl-[protein] + ATP = O-phospho-L-seryl-[protein] + ADP + H(+). It carries out the reaction L-threonyl-[protein] + ATP = O-phospho-L-threonyl-[protein] + ADP + H(+). With respect to regulation, activated by Ca(2+)/calmodulin. Binding of calmodulin may relieve intrasteric autoinhibition. Autophosphorylation does not alter activity or regulation by Ca(2+)/calmodulin. In part, activity is independent on Ca(2+)/calmodulin. Functionally, calcium/calmodulin-dependent protein kinase belonging to a proposed calcium-triggered signaling cascade involved in a number of cellular processes. Phosphorylates CAMK1, CAMK4 and CAMK1D. Efficiently phosphorylates 5'-AMP-activated protein kinase (AMPK) trimer, including that consisting of PRKAA1, PRKAB1 and PRKAG1. This phosphorylation is stimulated in response to Ca(2+) signals. May play a role in neurite growth. Isoform 2 may promote neurite elongation, while isoform 1 may promoter neurite branching. May be involved in hippocampal activation of CREB1. This chain is Calcium/calmodulin-dependent protein kinase kinase 2 (Camkk2), found in Mus musculus (Mouse).